We begin with the raw amino-acid sequence, 254 residues long: uncharacterized protein (254 aa).

This is an uncharacterized protein from Acheta domesticus (House cricket).